The chain runs to 441 residues: uncharacterized protein (441 aa).

The next 11 helical transmembrane spans lie at 68–88 (MAIAGAFAVLFLPYSLLGPFA), 110–130 (ALIAGVGTILAVGAGDVPLLV), 131–151 (GALVANGLARFVASGLSAALP), 164–184 (SVAIASGAVSAFLGANFMLLP), 194–214 (GASAIVFLVAIPVSIALLWSL), 229–246 (AIHGSAVYAVVTGWLHGA), 260–280 (SGLAAHRMVVGINSLLILLLV), 287–307 (AVGGLGTALLFFAATGLGAFL), 337–357 (VAAAGLLVPVMVVCGFLLGVA), 384–404 (VQDALFWVSYILSITVAAALI), and 412–432 (VFVLFGSAIYLAGLVVHTIVG).

Belongs to the major facilitator superfamily.

It is found in the cell membrane. This is an uncharacterized protein from Mycobacterium tuberculosis (strain ATCC 25618 / H37Rv).